Reading from the N-terminus, the 158-residue chain is C-type lectin BML-2 (158 aa).

The signal sequence occupies residues 1–23 (MGHFTFTGLCLLAMFLSLRGAEC). 4 cysteine pairs are disulfide-bonded: Cys-26-Cys-37, Cys-54-Cys-154, Cys-61-Cys-156, and Cys-129-Cys-146. A C-type lectin domain is found at 33–155 (KNGLCYKVFS…CESLHPFLCQ (123 aa)). A Mannose-binding motif is present at residues 119 to 121 (EPN). An N-linked (GlcNAc...) asparagine glycan is attached at Asn-121. Glu-127, Asn-142, and Asp-143 together coordinate Ca(2+).

This sequence belongs to the true venom lectin family. Dimer. Probably non-covalently linked. In terms of tissue distribution, expressed by the venom gland.

The protein localises to the secreted. In terms of biological role, recombinant C-type lectin BML-2 is able to agglutinate erythrocytes. May be a calcium-dependent lectin. This chain is C-type lectin BML-2, found in Bungarus multicinctus (Many-banded krait).